The chain runs to 71 residues: DNA-directed RNA polymerase subunit omega (71 aa).

Belongs to the RNA polymerase subunit omega family. In terms of assembly, the RNAP catalytic core consists of 2 alpha, 1 beta/beta' and 1 omega subunit. When a sigma factor is associated with the core the holoenzyme is formed, which can initiate transcription.

It carries out the reaction RNA(n) + a ribonucleoside 5'-triphosphate = RNA(n+1) + diphosphate. In terms of biological role, promotes RNA polymerase assembly. Latches the N- and C-terminal regions of the beta' subunit thereby facilitating its interaction with the beta and alpha subunits. In Wolinella succinogenes (strain ATCC 29543 / DSM 1740 / CCUG 13145 / JCM 31913 / LMG 7466 / NCTC 11488 / FDC 602W) (Vibrio succinogenes), this protein is DNA-directed RNA polymerase subunit omega.